The following is a 201-amino-acid chain: Glycerol-3-phosphate acyltransferase (201 aa).

5 consecutive transmembrane segments (helical) span residues 4–24 (LVAATLGGYLLGSVPFGLVLT), 55–75 (LATLLLDGGKGAIAVGLVWVL), 80–100 (MVPVAGFAAVLGHNFPVWLGF), 110–130 (IGTLLAAAWPVGLACIGTWLV), and 152–174 (FALYFAGPQYALMAAGLAVMGFY).

The protein belongs to the PlsY family. Probably interacts with PlsX.

Its subcellular location is the cell inner membrane. The enzyme catalyses an acyl phosphate + sn-glycerol 3-phosphate = a 1-acyl-sn-glycero-3-phosphate + phosphate. Its pathway is lipid metabolism; phospholipid metabolism. In terms of biological role, catalyzes the transfer of an acyl group from acyl-phosphate (acyl-PO(4)) to glycerol-3-phosphate (G3P) to form lysophosphatidic acid (LPA). This enzyme utilizes acyl-phosphate as fatty acyl donor, but not acyl-CoA or acyl-ACP. In Paramagnetospirillum magneticum (strain ATCC 700264 / AMB-1) (Magnetospirillum magneticum), this protein is Glycerol-3-phosphate acyltransferase.